Here is a 129-residue protein sequence, read N- to C-terminus: M-zodatoxin-Lt8h (129 aa).

An N-terminal signal peptide occupies residues methionine 1 to serine 20. Residues lysine 21–arginine 60 constitute a propeptide that is removed on maturation.

Belongs to the cationic peptide 06 (cytoinsectotoxin) family. In terms of tissue distribution, expressed by the venom gland.

Its subcellular location is the secreted. Insecticidal, cytolytic and antimicrobial peptide. Has insecticidal activity against the flesh fly S.carnaria. Has antibacterial activity against the Gram-negative bacteria E.coli. Forms voltage-dependent, ion-permeable channels in membranes. At high concentration causes cell membrane lysis. This Lachesana tarabaevi (Spider) protein is M-zodatoxin-Lt8h (cit 1-11).